Reading from the N-terminus, the 537-residue chain is 2-succinyl-5-enolpyruvyl-6-hydroxy-3-cyclohexene-1-carboxylate synthase (537 aa).

Belongs to the TPP enzyme family. MenD subfamily. As to quaternary structure, homodimer. Requires Mg(2+) as cofactor. Mn(2+) is required as a cofactor. The cofactor is thiamine diphosphate.

It catalyses the reaction isochorismate + 2-oxoglutarate + H(+) = 5-enolpyruvoyl-6-hydroxy-2-succinyl-cyclohex-3-ene-1-carboxylate + CO2. The protein operates within quinol/quinone metabolism; 1,4-dihydroxy-2-naphthoate biosynthesis; 1,4-dihydroxy-2-naphthoate from chorismate: step 2/7. Its pathway is quinol/quinone metabolism; menaquinone biosynthesis. Its function is as follows. Catalyzes the thiamine diphosphate-dependent decarboxylation of 2-oxoglutarate and the subsequent addition of the resulting succinic semialdehyde-thiamine pyrophosphate anion to isochorismate to yield 2-succinyl-5-enolpyruvyl-6-hydroxy-3-cyclohexene-1-carboxylate (SEPHCHC). This chain is 2-succinyl-5-enolpyruvyl-6-hydroxy-3-cyclohexene-1-carboxylate synthase, found in Dechloromonas aromatica (strain RCB).